Here is a 324-residue protein sequence, read N- to C-terminus: Putative ribose-phosphate pyrophosphokinase 1 (324 aa).

Residues 43–45 (DGE) and 102–103 (RQ) each bind ATP. Histidine 136 contacts Mg(2+). D-ribose 5-phosphate-binding positions include aspartate 225 and 229–233 (NTGQT).

The protein belongs to the ribose-phosphate pyrophosphokinase family. Class I subfamily. Homohexamer. Mg(2+) serves as cofactor.

The protein resides in the cytoplasm. It carries out the reaction D-ribose 5-phosphate + ATP = 5-phospho-alpha-D-ribose 1-diphosphate + AMP + H(+). It functions in the pathway metabolic intermediate biosynthesis; 5-phospho-alpha-D-ribose 1-diphosphate biosynthesis; 5-phospho-alpha-D-ribose 1-diphosphate from D-ribose 5-phosphate (route I): step 1/1. In terms of biological role, involved in the biosynthesis of the central metabolite phospho-alpha-D-ribosyl-1-pyrophosphate (PRPP) via the transfer of pyrophosphoryl group from ATP to 1-hydroxyl of ribose-5-phosphate (Rib-5-P). This Enterococcus faecalis (strain ATCC 700802 / V583) protein is Putative ribose-phosphate pyrophosphokinase 1.